The sequence spans 164 residues: Ribosome-binding factor A (164 aa).

Belongs to the RbfA family. In terms of assembly, monomer. Binds 30S ribosomal subunits, but not 50S ribosomal subunits or 70S ribosomes.

It is found in the cytoplasm. In terms of biological role, one of several proteins that assist in the late maturation steps of the functional core of the 30S ribosomal subunit. Associates with free 30S ribosomal subunits (but not with 30S subunits that are part of 70S ribosomes or polysomes). Required for efficient processing of 16S rRNA. May interact with the 5'-terminal helix region of 16S rRNA. This is Ribosome-binding factor A from Caulobacter sp. (strain K31).